Reading from the N-terminus, the 359-residue chain is Small ribosomal subunit protein mS22 (359 aa).

The tract at residues 40–65 (RPQPFEVGQPRRLLSSEAESGSSEVK) is disordered. A Phosphoserine modification is found at S54. N6-acetyllysine is present on K210.

This sequence belongs to the mitochondrion-specific ribosomal protein mS22 family. In terms of assembly, component of the mitochondrial ribosome small subunit (28S) which comprises a 12S rRNA and about 30 distinct proteins.

The protein localises to the mitochondrion. This chain is Small ribosomal subunit protein mS22 (Mrps22), found in Mus musculus (Mouse).